The chain runs to 299 residues: Oxygen-dependent coproporphyrinogen-III oxidase (299 aa).

Position 92 (Ser-92) interacts with substrate. Residues His-96 and His-106 each coordinate a divalent metal cation. The Proton donor role is filled by His-106. Substrate is bound at residue 108–110; that stretch reads NVR. His-145 and His-175 together coordinate a divalent metal cation. The tract at residues 239 to 274 is important for dimerization; sequence YVEFNLVYDRGTLFGLQSGGRAESILMSLPPRVRWE. A substrate-binding site is contributed by 257–259; it reads GGR.

It belongs to the aerobic coproporphyrinogen-III oxidase family. Homodimer. A divalent metal cation serves as cofactor.

The protein localises to the cytoplasm. The enzyme catalyses coproporphyrinogen III + O2 + 2 H(+) = protoporphyrinogen IX + 2 CO2 + 2 H2O. It participates in porphyrin-containing compound metabolism; protoporphyrin-IX biosynthesis; protoporphyrinogen-IX from coproporphyrinogen-III (O2 route): step 1/1. Its function is as follows. Involved in the heme biosynthesis. Catalyzes the aerobic oxidative decarboxylation of propionate groups of rings A and B of coproporphyrinogen-III to yield the vinyl groups in protoporphyrinogen-IX. This chain is Oxygen-dependent coproporphyrinogen-III oxidase, found in Xanthomonas euvesicatoria pv. vesicatoria (strain 85-10) (Xanthomonas campestris pv. vesicatoria).